The chain runs to 207 residues: Putative 3-methyladenine DNA glycosylase (207 aa).

It belongs to the DNA glycosylase MPG family.

The sequence is that of Putative 3-methyladenine DNA glycosylase from Listeria monocytogenes serovar 1/2a (strain ATCC BAA-679 / EGD-e).